We begin with the raw amino-acid sequence, 143 residues long: Small ribosomal subunit protein bS6 (143 aa).

Residues 96–143 form a disordered region; sequence VTEASPMAAAKEERRDDRREVKKDVAAAPVEAKEDSVEEKSEEAASEE. Residues 105–143 show a composition bias toward basic and acidic residues; it reads AKEERRDDRREVKKDVAAAPVEAKEDSVEEKSEEAASEE.

Belongs to the bacterial ribosomal protein bS6 family.

Functionally, binds together with bS18 to 16S ribosomal RNA. The protein is Small ribosomal subunit protein bS6 of Colwellia psychrerythraea (strain 34H / ATCC BAA-681) (Vibrio psychroerythus).